We begin with the raw amino-acid sequence, 64 residues long: Large ribosomal subunit protein bL28 (64 aa).

The protein belongs to the bacterial ribosomal protein bL28 family.

This Campylobacter lari (strain RM2100 / D67 / ATCC BAA-1060) protein is Large ribosomal subunit protein bL28.